A 507-amino-acid chain; its full sequence is Phosphoprotein (507 aa).

The segment at 1–48 (MAEEQARHVKNGLECIRALKAEPIGSLAVEEAMAAWSEISDNPGQDRA) is interaction with N0. Disordered regions lie at residues 40-92 (SDNP…DAET), 133-168 (SGLDGDSTLSGGDDESENSDVDIGEPDTEGYAITDR), 201-228 (NNFPKLGKTLNVPPPPNPSRASTSETPI), and 252-273 (TQCARKSPSEPSGPGAPAGNVP). Serine 86 is subject to Phosphoserine. A compositionally biased stretch (low complexity) spans 133–143 (SGLDGDSTLSG). Over residues 144–160 (GDDESENSDVDIGEPDT) the composition is skewed to acidic residues. Serine 151 bears the Phosphoserine mark. Residues 260–270 (SEPSGPGAPAG) show a composition bias toward low complexity. Positions 304–376 (GDYYDDELFS…LSSIMIAIPG (73 aa)) are multimerization. Interaction with the L polymerase regions lie at residues 361 to 377 (STLEGHLSSIMIAIPGL) and 396 to 410 (PIIGRDSGRALAEVL). The x domain (XD) stretch occupies residues 457-507 (GPASRSVIRSIIKSSRLEEDRKRYLMTLLDDIKGANDLAKFHQMLMKIIMK). Residues 459-507 (ASRSVIRSIIKSSRLEEDRKRYLMTLLDDIKGANDLAKFHQMLMKIIMK) are interaction with the nucleocapsid (N-RNA).

Belongs to the morbillivirus P protein family. In terms of assembly, homotetramer. Interacts (via multimerization domain and XD domain) with polymerase L; this interaction forms the polymerase L-P complex. Interacts (via N-terminus) with N0 (via Ncore); this interaction allows P to chaperon N0 to avoid N polymerization and non-specific RNA binding before encapsidation. Interacts (via C-terminus) with N-RNA template (via Ntail); this interaction maintains the P/L complex anchored to the nucleocapsid template during the sequential transcription. Interacts (via C-terminus) with protein C this interaction allows C to associate with the ribonucleocapsid. In terms of processing, phosphorylation on serines by host CK2 is necessary for the formation of viral factories.

Functionally, essential cofactor of the RNA polymerase L that plays a central role in the transcription and replication by forming the polymerase complex with RNA polymerase L and recruiting L to the genomic N-RNA template for RNA synthesis. Also plays a central role in the encapsidation of nascent RNA chains by forming the encapsidation complex with the nucleocapsid protein N (N-P complex). Acts as a chaperone for newly synthesized free N protein, so-called N0, allowing encapsidation of nascent RNA chains during replication. The nucleoprotein protein N prevents excessive phosphorylation of P, which leads to down-regulation of viral transcription/ replication. Participates, together with N, in the formation of viral factories (viroplasms), which are large inclusions in the host cytoplasm where replication takes place. The protein is Phosphoprotein (P/V) of Homo sapiens (Human).